The primary structure comprises 257 residues: Acetylglutamate kinase (257 aa).

Residues 41–42, R63, and N156 contribute to the substrate site; that span reads GG.

The protein belongs to the acetylglutamate kinase family. ArgB subfamily.

The protein localises to the cytoplasm. It carries out the reaction N-acetyl-L-glutamate + ATP = N-acetyl-L-glutamyl 5-phosphate + ADP. Its pathway is amino-acid biosynthesis; L-arginine biosynthesis; N(2)-acetyl-L-ornithine from L-glutamate: step 2/4. Its function is as follows. Catalyzes the ATP-dependent phosphorylation of N-acetyl-L-glutamate. This chain is Acetylglutamate kinase, found in Geobacillus sp. (strain WCH70).